The sequence spans 157 residues: Ribosome-binding factor A (157 aa).

The tract at residues Gln-127–Asp-157 is disordered. Over residues Ala-135–Asp-157 the composition is skewed to acidic residues.

It belongs to the RbfA family. As to quaternary structure, monomer. Binds 30S ribosomal subunits, but not 50S ribosomal subunits or 70S ribosomes.

The protein localises to the cytoplasm. Functionally, one of several proteins that assist in the late maturation steps of the functional core of the 30S ribosomal subunit. Associates with free 30S ribosomal subunits (but not with 30S subunits that are part of 70S ribosomes or polysomes). Required for efficient processing of 16S rRNA. May interact with the 5'-terminal helix region of 16S rRNA. The polypeptide is Ribosome-binding factor A (Shewanella baltica (strain OS155 / ATCC BAA-1091)).